Consider the following 435-residue polypeptide: MLYSSLRSSLLANIPHSNRFVIALSGGLDSRVLLHLMGRFIQENPQYQCDAVHVHHGLSVNADKWAQQCLQWAFEEKITCHIEHVTLVLGNRISVEQQAREQRYLALSKHVQQGDCLLTAQHADDQLETFLLALKRGSGPAGLASMPESTTFGISYHLRPLLQVTRQSITDYGIAHQLEWVEDESNQDQRYDRNFLRHQITPLLHQRWPGIRKAVSRSAALCGEQEALLNELLASHLSKALHVDQSLKIVELGSERIGKQLIRQWLSLFTVLMPSQAQLQQIWQSVVLAQDDANPQVCWDNHQIRRYKQRLYVVKQWADISLFQQKCELNQACSLPEGLGTLVLTTVKANGILRLPQQHEIVSVRFEPEGIEAKPQGRIGKRKLKKLFQEYEVPSWNRRRTPLVFYNDRLAAVAGLFVTEDFFGEDCDLDWLCNS.

An ATP-binding site is contributed by Ser25 to Ser30.

It belongs to the tRNA(Ile)-lysidine synthase family.

Its subcellular location is the cytoplasm. It carries out the reaction cytidine(34) in tRNA(Ile2) + L-lysine + ATP = lysidine(34) in tRNA(Ile2) + AMP + diphosphate + H(+). Functionally, ligates lysine onto the cytidine present at position 34 of the AUA codon-specific tRNA(Ile) that contains the anticodon CAU, in an ATP-dependent manner. Cytidine is converted to lysidine, thus changing the amino acid specificity of the tRNA from methionine to isoleucine. In Photobacterium profundum (strain SS9), this protein is tRNA(Ile)-lysidine synthase.